Reading from the N-terminus, the 257-residue chain is 5'-nucleotidase SurE (257 aa).

Positions 8, 9, 40, and 92 each coordinate a divalent metal cation.

Belongs to the SurE nucleotidase family. A divalent metal cation is required as a cofactor.

It is found in the cytoplasm. The enzyme catalyses a ribonucleoside 5'-phosphate + H2O = a ribonucleoside + phosphate. In terms of biological role, nucleotidase that shows phosphatase activity on nucleoside 5'-monophosphates. The protein is 5'-nucleotidase SurE of Rhizobium rhizogenes (strain K84 / ATCC BAA-868) (Agrobacterium radiobacter).